A 503-amino-acid chain; its full sequence is Maturase K (503 aa).

This sequence belongs to the intron maturase 2 family. MatK subfamily.

It localises to the plastid. Its subcellular location is the chloroplast. Its function is as follows. Usually encoded in the trnK tRNA gene intron. Probably assists in splicing its own and other chloroplast group II introns. The polypeptide is Maturase K (Rhamnus cathartica (Common buckthorn)).